Here is a 95-residue protein sequence, read N- to C-terminus: Large ribosomal subunit protein uL23 (95 aa).

Belongs to the universal ribosomal protein uL23 family. In terms of assembly, part of the 50S ribosomal subunit. Contacts protein L29, and trigger factor when it is bound to the ribosome.

Functionally, one of the early assembly proteins it binds 23S rRNA. One of the proteins that surrounds the polypeptide exit tunnel on the outside of the ribosome. Forms the main docking site for trigger factor binding to the ribosome. This is Large ribosomal subunit protein uL23 from Thermodesulfovibrio yellowstonii (strain ATCC 51303 / DSM 11347 / YP87).